Here is a 662-residue protein sequence, read N- to C-terminus: Glycogen debranching enzyme (662 aa).

Residue D338 is the Nucleophile of the active site. E373 serves as the catalytic Proton donor.

This sequence belongs to the glycosyl hydrolase 13 family.

The enzyme catalyses Hydrolysis of (1-&gt;6)-alpha-D-glucosidic linkages to branches with degrees of polymerization of three or four glucose residues in limit dextrin.. It participates in glycan degradation; glycogen degradation. Removes maltotriose and maltotetraose chains that are attached by 1,6-alpha-linkage to the limit dextrin main chain, generating a debranched limit dextrin. In Yersinia pseudotuberculosis serotype I (strain IP32953), this protein is Glycogen debranching enzyme.